A 237-amino-acid polypeptide reads, in one-letter code: Photosystem I-associated linker protein CpcL (237 aa).

Residues Thr11 to Arg191 form the PBS-linker domain. Residues Gly208–Leu228 traverse the membrane as a helical segment.

The protein belongs to the phycobilisome linker protein family. In terms of assembly, part of a specialized phycobilisome (PBS), a structure that is usually composed of two distinct substructures: a core complex and a number of rods radiating from the core. This protein is part of a core-less PBS rod (called CpcL-PBS). In vegetative cells associated substoichiometrically with photosystem I and phycobiliproteins phycocyanin as well as phycoerythrocyanin in the thylakoid membrane, not found in conventional, hemidiscoidal phycobilisomes.

The protein resides in the cellular thylakoid membrane. In terms of biological role, rod linker protein, associated with phycocyanin (PC). Linker polypeptides determine the state of aggregation and the location of the disk-shaped phycobiliprotein units within the phycobilisome (PBS) and modulate their spectroscopic properties in order to mediate a directed and optimal energy transfer. Forms a supercomplex with tetrameric photosystem I (PSI) and PC that allows efficient energy transfer from PC to PSI. This protein seems to be in the middle of the PC hexameric rod and may anchor the PC rods at the periphery of PSI tetramers. May be involved in the cyclic electron transport around PSI that provides ATP needed for N(2) fixation in heterocysts. The sequence is that of Photosystem I-associated linker protein CpcL from Nostoc sp. (strain PCC 7120 / SAG 25.82 / UTEX 2576).